A 947-amino-acid polypeptide reads, in one-letter code: Plasma membrane ATPase 2 (947 aa).

Positions 1 to 103 are disordered; it reads MSSTEAKQYK…TDGVHAGQRV (103 aa). The Cytoplasmic segment spans residues 1–144; it reads MSSTEAKQYK…AEENESLIVK (144 aa). A compositionally biased stretch (basic and acidic residues) spans 7-22; the sequence is KQYKEKPSKEYLHASD. Low complexity predominate over residues 26–61; sequence PANNSAASSSSSSSTSTSASSSAAAVPRKAAAASAA. Residues 62–74 show a composition bias toward acidic residues; the sequence is DDSDSDEDIDQLI. A helical transmembrane segment spans residues 145–165; sequence FLMFFVGPIQFVMEAAAILAA. At 166 to 169 the chain is on the extracellular side; sequence GLSD. Residues 170-189 traverse the membrane as a helical segment; it reads WVDVGVICALLLLNASVGFI. The Cytoplasmic portion of the chain corresponds to 190–320; it reads QEFQAGSIVD…VEGHFTEVLN (131 aa). The helical transmembrane segment at 321 to 342 threads the bilayer; the sequence is GIGIILLVLVIATLLLVWTACF. Over 343–353 the chain is Extracellular; the sequence is YRTVGIVSILR. A helical transmembrane segment spans residues 354 to 376; that stretch reads YTLGITIIGVPVGLPAVVTTTMA. Over 377–748 the chain is Cytoplasmic; the sequence is VGAAYLAKKQ…IAILNNSLDI (372 aa). The active-site 4-aspartylphosphate intermediate is Asp407. Mg(2+) contacts are provided by Asp663 and Asp667. A helical transmembrane segment spans residues 749 to 767; sequence NLIVFIAIFADVATLTIAY. At 768-783 the chain is on the extracellular side; the sequence is DNAPYAPEPVKWNLPR. Residues 784–803 form a helical membrane-spanning segment; the sequence is LWGMSIILGIVLAIGSWITL. Residues 804–853 lie on the Cytoplasmic side of the membrane; it reads TTMFLPNGGIIQNFGAMNGVMFLQISLTENWLIFVTRAAGPFWSSIPSWQ. The helical transmembrane segment at 854–874 threads the bilayer; that stretch reads LAGAVFAVDIIATMFTLFGWW. The Extracellular portion of the chain corresponds to 875–886; the sequence is SENWTDIVSVVR. Residues 887–903 traverse the membrane as a helical segment; sequence VWIWSIGIFCVLGGFYY. Over 904-947 the chain is Cytoplasmic; sequence IMSTSQAFDRLMNGKSLKEKKSTRSVEDFMAAMQRVSTQHEKSS.

This sequence belongs to the cation transport ATPase (P-type) (TC 3.A.3) family. Type IIIA subfamily.

The protein resides in the cell membrane. It catalyses the reaction ATP + H2O + H(+)(in) = ADP + phosphate + 2 H(+)(out). Its function is as follows. The plasma membrane ATPase of plants and fungi is a hydrogen ion pump. The proton gradient it generates drives the active transport of nutrients by H(+)-symport. The resulting external acidification and/or internal alkinization may mediate growth responses. This chain is Plasma membrane ATPase 2 (PMA2), found in Saccharomyces cerevisiae (strain ATCC 204508 / S288c) (Baker's yeast).